A 353-amino-acid polypeptide reads, in one-letter code: Photosystem II D2 protein (353 aa).

Thr-2 carries the N-acetylthreonine modification. The residue at position 2 (Thr-2) is a Phosphothreonine. A helical transmembrane segment spans residues 41–61 (CAYFALGGWFTGTTFVTSWYT). His-118 provides a ligand contact to chlorophyll a. Residues 125-141 (GFMLRQFELARSVQLRP) form a helical membrane-spanning segment. 2 residues coordinate pheophytin a: Gln-130 and Asn-143. A helical transmembrane segment spans residues 153-166 (VFVSVFLIYPLGQS). A chlorophyll a-binding site is contributed by His-198. A helical membrane pass occupies residues 208-228 (AALLCAIHGATVENTLFEDGD). A plastoquinone-binding residues include His-215 and Phe-262. Fe cation is bound at residue His-215. His-269 is a Fe cation binding site. Residues 279–295 (GLWMSALGVVGLALNLR) traverse the membrane as a helical segment.

It belongs to the reaction center PufL/M/PsbA/D family. PSII is composed of 1 copy each of membrane proteins PsbA, PsbB, PsbC, PsbD, PsbE, PsbF, PsbH, PsbI, PsbJ, PsbK, PsbL, PsbM, PsbT, PsbX, PsbY, PsbZ, Psb30/Ycf12, at least 3 peripheral proteins of the oxygen-evolving complex and a large number of cofactors. It forms dimeric complexes. The cofactor is The D1/D2 heterodimer binds P680, chlorophylls that are the primary electron donor of PSII, and subsequent electron acceptors. It shares a non-heme iron and each subunit binds pheophytin, quinone, additional chlorophylls, carotenoids and lipids. There is also a Cl(-1) ion associated with D1 and D2, which is required for oxygen evolution. The PSII complex binds additional chlorophylls, carotenoids and specific lipids..

Its subcellular location is the plastid. The protein resides in the chloroplast thylakoid membrane. It carries out the reaction 2 a plastoquinone + 4 hnu + 2 H2O = 2 a plastoquinol + O2. In terms of biological role, photosystem II (PSII) is a light-driven water:plastoquinone oxidoreductase that uses light energy to abstract electrons from H(2)O, generating O(2) and a proton gradient subsequently used for ATP formation. It consists of a core antenna complex that captures photons, and an electron transfer chain that converts photonic excitation into a charge separation. The D1/D2 (PsbA/PsbD) reaction center heterodimer binds P680, the primary electron donor of PSII as well as several subsequent electron acceptors. D2 is needed for assembly of a stable PSII complex. This chain is Photosystem II D2 protein, found in Olimarabidopsis pumila (Dwarf rocket).